A 349-amino-acid polypeptide reads, in one-letter code: Ribosomal RNA large subunit methyltransferase Cfr (349 aa).

The active-site Proton acceptor is the glutamate 89. The region spanning 96–331 (KAGWESFCIS…VTVRSQFGID (236 aa)) is the Radical SAM core domain. Cysteine 103 and cysteine 336 form a disulfide bridge. [4Fe-4S] cluster is bound by residues cysteine 110, cysteine 114, and cysteine 117. Residues 156–157 (GE), serine 187, 210–212 (SLH), and asparagine 291 each bind S-adenosyl-L-methionine. Cysteine 336 (S-methylcysteine intermediate) is an active-site residue.

It belongs to the radical SAM superfamily. RlmN family. Cfr subfamily. It depends on [4Fe-4S] cluster as a cofactor.

It is found in the cytoplasm. It catalyses the reaction adenosine(2503) in 23S rRNA + 2 reduced [2Fe-2S]-[ferredoxin] + 2 S-adenosyl-L-methionine = 8-methyladenosine(2503) in 23S rRNA + 5'-deoxyadenosine + L-methionine + 2 oxidized [2Fe-2S]-[ferredoxin] + S-adenosyl-L-homocysteine. Specifically methylates position 8 of adenine 2503 in 23S rRNA. Confers resistance to some classes of antibiotics. This chain is Ribosomal RNA large subunit methyltransferase Cfr, found in Bacillus velezensis (strain DSM 23117 / BGSC 10A6 / LMG 26770 / FZB42) (Bacillus amyloliquefaciens subsp. plantarum).